The sequence spans 121 residues: Large ribosomal subunit protein bL12 (121 aa).

It belongs to the bacterial ribosomal protein bL12 family. As to quaternary structure, homodimer. Part of the ribosomal stalk of the 50S ribosomal subunit. Forms a multimeric L10(L12)X complex, where L10 forms an elongated spine to which 2 to 4 L12 dimers bind in a sequential fashion. Binds GTP-bound translation factors.

In terms of biological role, forms part of the ribosomal stalk which helps the ribosome interact with GTP-bound translation factors. Is thus essential for accurate translation. This is Large ribosomal subunit protein bL12 from Shewanella halifaxensis (strain HAW-EB4).